We begin with the raw amino-acid sequence, 559 residues long: Probable inorganic carbon transporter subunit DabB1 (559 aa).

The next 13 membrane-spanning stretches (helical) occupy residues 4 to 24 (LQWLIPLLPLLSALLVQLFAA), 33 to 53 (LSVALGTLTVIVAAYQLVAYI), 76 to 96 (LSSIMSLVVAGISLIVHVYSI), 106 to 126 (PRFFLLLDLMTASILLMVAAG), 173 to 193 (LVLAAVLLYQTYGAIDFPTLF), 202 to 222 (ATIMGLPTAITAAFLVALSAF), 240 to 260 (GPTPVSALMHAGIVNAGGFII), 273 to 293 (VLHMLFVVGLITALVGSVLML), 310 to 330 (MGFMVMECGLGAFSLAVFHLI), 375 to 395 (LPWLFIGLATLVVPLFILVIA), 408 to 428 (GAIVLLFFGWITGVQVLFATH), 440 to 460 (MMILLSFTLIVVGYTFIGHAF), and 487 to 507 (GLVFLLALIVVAGWFSSYLAS).

This sequence belongs to the inorganic carbon transporter (TC 9.A.2) DabB family. In terms of assembly, forms a complex with DabA1.

It is found in the cell inner membrane. In terms of biological role, part of an energy-coupled inorganic carbon pump. The protein is Probable inorganic carbon transporter subunit DabB1 of Halothiobacillus neapolitanus (strain ATCC 23641 / c2) (Thiobacillus neapolitanus).